The following is a 197-amino-acid chain: Elongation factor Ts (197 aa).

Residues Thr81–Val84 form an involved in Mg(2+) ion dislocation from EF-Tu region.

The protein belongs to the EF-Ts family.

The protein resides in the cytoplasm. Its function is as follows. Associates with the EF-Tu.GDP complex and induces the exchange of GDP to GTP. It remains bound to the aminoacyl-tRNA.EF-Tu.GTP complex up to the GTP hydrolysis stage on the ribosome. The sequence is that of Elongation factor Ts from Coprothermobacter proteolyticus (strain ATCC 35245 / DSM 5265 / OCM 4 / BT).